Reading from the N-terminus, the 425-residue chain is TRAF family member-associated NF-kappa-B activator (425 aa).

M1 carries the N-acetylmethionine modification. The interval 1-31 (MDKNIGEQLNKAYEAFRQACMDRDSAVKELQ) is necessary for interaction with ZC3H12A. Residues 22–62 (DRDSAVKELQQKTENYEQRIREQQEQLSLQQTIIDKLKSQL) adopt a coiled-coil conformation. Positions 70–191 (DNNYGCVPLL…QCTDKTDKQE (122 aa)) are necessary for interaction with TRAF6. Residues S126 and S129 each carry the phosphoserine modification. An interaction with TBK1 and IKBKE region spans residues 133–172 (HERGNIEKTFWDLKEEFHKICMLAKAQKDHLSKLNIPDTA). Positions 172–191 (ATETQCSVPIQCTDKTDKQE) are TRAF family member interaction. Phosphoserine occurs at positions 178 and 208. Position 213 is a phosphothreonine (T213). Residues S225, S228, S341, S354, and S357 each carry the phosphoserine modification. The UBZ1-type zinc finger occupies 393–420 (PRVCEFCQAVFPPSITSRGDFLRHLNSH). The Zn(2+) site is built by C396, C399, H416, and H420.

Homodimer. Found in a deubiquitination complex with TANK, USP10 and ZC3H12A; this complex inhibits genotoxic stress- or interleukin-1-beta-mediated NF-kappaB activation by promoting IKBKG or TRAF6 deubiquitination. Interacts with IKBKG; this interaction increases in response to DNA damage. Interacts with TRAF6; this interaction increases in response to DNA damage and recruits USP10 to the ubiquitinated TRAF6. Interacts with USP10; this interaction increases in response to DNA damage. Interacts with ZC3H12A; this interaction increases in response to DNA damage. Interacts with TBK1. Interacts with IKBKE. Also interacts with TRAF1, TRAF2, and TRAF3 by binding to their TRAF-C domains; the interaction with TRAF2 is disrupted by the phosphorylation of TANK by IKBKE. Interacts more strongly with TRAF1 and TRAF2 than TRAF3. Interacts with IKBKG; the interaction is enhanced by IKBKE and TBK1. Part of a ternary complex consisting of TANK, IKBKB and IKBKG. In terms of assembly, (Microbial infection) Interacts with vaccinia virus protein C6. As to quaternary structure, (Microbial infection) Interacts with Seneca Valley virus protease 3C; this interaction allows the cleavage of TANK and subsequent suppression of host innate immunity. Phosphorylated by IKBKE. Post-translationally, (Microbial infection) Cleaved by encephalomyocarditis virus (EMCV) protease 3C. This cleavage allows the virus to disrupt the TANK-TBK1-IKKepsilon-IRF3 complex, thereby inhibiting the induction of the IFN-beta signal pathway. In terms of processing, (Microbial infection) Cleaved by Seneca Valley virus protease 3C allowing the virus to suppress interferon type-I through both RIG-I and Toll-like receptor-dependent pathways. In terms of tissue distribution, ubiquitous.

Its subcellular location is the cytoplasm. In terms of biological role, adapter protein involved in I-kappa-B-kinase (IKK) regulation which constitutively binds TBK1 and IKBKE playing a role in antiviral innate immunity. Acts as a regulator of TRAF function by maintaining them in a latent state. Blocks TRAF2 binding to LMP1 and inhibits LMP1-mediated NF-kappa-B activation. Negatively regulates NF-kappaB signaling and cell survival upon DNA damage. Plays a role as an adapter to assemble ZC3H12A, USP10 in a deubiquitination complex which plays a negative feedback response to attenuate NF-kappaB activation through the deubiquitination of IKBKG or TRAF6 in response to interleukin-1-beta (IL1B) stimulation or upon DNA damage. Promotes UBP10-induced deubiquitination of TRAF6 in response to DNA damage. May control negatively TRAF2-mediated NF-kappa-B activation signaled by CD40, TNFR1 and TNFR2. In Homo sapiens (Human), this protein is TRAF family member-associated NF-kappa-B activator (TANK).